The sequence spans 78 residues: MDNIVERVKKIVAEQLGVNEADIKNESSFVDDLGADSLDTVELVMALEEEFECEIPDDQAEKITTVQQAVDYILAGKK.

One can recognise a Carrier domain in the interval 2–77; that stretch reads DNIVERVKKI…QAVDYILAGK (76 aa). The residue at position 37 (Ser-37) is an O-(pantetheine 4'-phosphoryl)serine.

It belongs to the acyl carrier protein (ACP) family. Post-translationally, 4'-phosphopantetheine is transferred from CoA to a specific serine of apo-ACP by AcpS. This modification is essential for activity because fatty acids are bound in thioester linkage to the sulfhydryl of the prosthetic group.

It localises to the cytoplasm. It functions in the pathway lipid metabolism; fatty acid biosynthesis. In terms of biological role, carrier of the growing fatty acid chain in fatty acid biosynthesis. The polypeptide is Acyl carrier protein (Dechloromonas aromatica (strain RCB)).